The following is a 300-amino-acid chain: Mitochondrial GTP/GDP carrier protein 1 (300 aa).

3 Solcar repeats span residues 8–108 (QSGL…KKDF), 117–198 (GKAM…AKEY), and 208–293 (ATWS…LIPR). Helical transmembrane passes span 14-34 (LLGS…VDTI), 85-101 (QRVY…EFLN), 122-142 (SAAA…LDVL), 173-189 (GWGW…FALF), 214-234 (FISS…LDVI), and 268-285 (GLTP…FSFA).

It belongs to the mitochondrial carrier (TC 2.A.29) family.

It is found in the mitochondrion inner membrane. In terms of biological role, mitochondrial GTP/GDP transporter required for GTP uptake and GDP exit from mitochondria. Involved in mitochondrial iron transport and essential for mitochondrial genome maintenance. This is Mitochondrial GTP/GDP carrier protein 1 (GGC1) from Saccharomyces cerevisiae (strain ATCC 204508 / S288c) (Baker's yeast).